The primary structure comprises 177 residues: Platelet glycoprotein IX (177 aa).

Residues 1 to 16 (MPAWGALFLLWATAEA) form the signal peptide. The 35-residue stretch at 17–51 (TKDCPSPCTCRALETMGLWVDCRGHGLTALPALPA) folds into the LRRNT domain. The Extracellular segment spans residues 17–147 (TKDCPSPCTC…QLQASWVRPG (131 aa)). Residue Asn-60 is glycosylated (N-linked (GlcNAc...) asparagine). Residues 60–83 (NNSLQSVPPGAFDHLPQLQTLDVT) form an LRR repeat. Residues 85 to 137 (NPWHCDCSLTYLRLWLEDRTPEALLQVRCASPSLAAHGPLGRLTGYQLGSCGW) enclose the LRRCT domain. A helical transmembrane segment spans residues 148-168 (VLWDVALVAVAALGLALLAGL). Over 169 to 177 (LCATTEALD) the chain is Cytoplasmic.

As to quaternary structure, two GP-Ib beta are disulfide-linked to one GP-Ib alpha. GP-IX is complexed with the GP-Ib heterodimer via a non covalent linkage.

It is found in the membrane. Its function is as follows. The GPIb-V-IX complex functions as the vWF receptor and mediates vWF-dependent platelet adhesion to blood vessels. The adhesion of platelets to injured vascular surfaces in the arterial circulation is a critical initiating event in hemostasis. GP-IX may provide for membrane insertion and orientation of GP-Ib. The sequence is that of Platelet glycoprotein IX (GP9) from Homo sapiens (Human).